Reading from the N-terminus, the 82-residue chain is Splicing factor U2AF 35 kDa subunit (82 aa).

Alanine 2 is subject to N-acetylalanine. A C3H1-type zinc finger spans residues 12–40 (EKDKVNCSFYFKIGACRHGDRCSRLHNKP). Residue lysine 39 is modified to N6-methyllysine. Residues 65–82 (SHCHVSDVEVQEHYDNFF) form the RRM domain.

The protein belongs to the splicing factor SR family. Identified in the spliceosome C complex. Heterodimer with U2AF2. Interacts (via RS domain) with PHF5A (via N-terminus). Interacts with ZRANB2. Interacts with SDE2. Interacts with SF3B1.

It localises to the nucleus. The protein resides in the nucleus speckle. Its function is as follows. Plays a critical role in both constitutive and enhancer-dependent splicing by mediating protein-protein interactions and protein-RNA interactions required for accurate 3'-splice site selection. Recruits U2 snRNP to the branch point. Directly mediates interactions between U2AF2 and proteins bound to the enhancers and thus may function as a bridge between U2AF2 and the enhancer complex to recruit it to the adjacent intron. This is Splicing factor U2AF 35 kDa subunit (U2AF1) from Sus scrofa (Pig).